A 759-amino-acid polypeptide reads, in one-letter code: Phosphoribosylformylglycinamidine synthase subunit PurL (759 aa).

H46 is an active-site residue. Positions 49 and 88 each coordinate ATP. Residue E90 participates in Mg(2+) binding. Residues 91-94 (SHNH) and R113 contribute to the substrate site. The Proton acceptor role is filled by H92. D114 contacts Mg(2+). Q237 contacts substrate. Residue D265 coordinates Mg(2+). 309–311 (ESQ) is a binding site for substrate. The ATP site is built by D498 and G535. N536 provides a ligand contact to Mg(2+). Substrate is bound at residue S538.

Belongs to the FGAMS family. As to quaternary structure, monomer. Part of the FGAM synthase complex composed of 1 PurL, 1 PurQ and 2 PurS subunits.

The protein resides in the cytoplasm. It carries out the reaction N(2)-formyl-N(1)-(5-phospho-beta-D-ribosyl)glycinamide + L-glutamine + ATP + H2O = 2-formamido-N(1)-(5-O-phospho-beta-D-ribosyl)acetamidine + L-glutamate + ADP + phosphate + H(+). It functions in the pathway purine metabolism; IMP biosynthesis via de novo pathway; 5-amino-1-(5-phospho-D-ribosyl)imidazole from N(2)-formyl-N(1)-(5-phospho-D-ribosyl)glycinamide: step 1/2. Functionally, part of the phosphoribosylformylglycinamidine synthase complex involved in the purines biosynthetic pathway. Catalyzes the ATP-dependent conversion of formylglycinamide ribonucleotide (FGAR) and glutamine to yield formylglycinamidine ribonucleotide (FGAM) and glutamate. The FGAM synthase complex is composed of three subunits. PurQ produces an ammonia molecule by converting glutamine to glutamate. PurL transfers the ammonia molecule to FGAR to form FGAM in an ATP-dependent manner. PurS interacts with PurQ and PurL and is thought to assist in the transfer of the ammonia molecule from PurQ to PurL. The chain is Phosphoribosylformylglycinamidine synthase subunit PurL from Anaeromyxobacter sp. (strain K).